The sequence spans 321 residues: tRNA U34 carboxymethyltransferase (321 aa).

Residues lysine 90, tryptophan 104, lysine 109, glycine 129, 151-153 (DPT), 180-181 (IE), methionine 195, tyrosine 199, and arginine 314 each bind carboxy-S-adenosyl-L-methionine.

The protein belongs to the class I-like SAM-binding methyltransferase superfamily. CmoB family. Homotetramer.

It carries out the reaction carboxy-S-adenosyl-L-methionine + 5-hydroxyuridine(34) in tRNA = 5-carboxymethoxyuridine(34) in tRNA + S-adenosyl-L-homocysteine + H(+). In terms of biological role, catalyzes carboxymethyl transfer from carboxy-S-adenosyl-L-methionine (Cx-SAM) to 5-hydroxyuridine (ho5U) to form 5-carboxymethoxyuridine (cmo5U) at position 34 in tRNAs. In Pasteurella multocida (strain Pm70), this protein is tRNA U34 carboxymethyltransferase.